The primary structure comprises 96 residues: Protein Vpr (96 aa).

Residues Met1–Leu42 form a homooligomerization region. Ser79, Ser94, and Ser96 each carry phosphoserine; by host.

Belongs to the HIV-1 VPR protein family. Homooligomer, may form homodimer. Interacts with p6-gag region of the Pr55 Gag precursor protein through a (Leu-X-X)4 motif near the C-terminus of the P6gag protein. Interacts with host UNG. May interact with host RAD23A/HHR23A. Interacts with host VPRBP/DCAF1, leading to hijack the CUL4A-RBX1-DDB1-DCAF1/VPRBP complex, mediating ubiquitination of host proteins such as TERT and ZGPAT and arrest of the cell cycle in G2 phase. In terms of processing, phosphorylated on several residues by host. These phosphorylations regulate VPR activity for the nuclear import of the HIV-1 pre-integration complex.

It localises to the virion. The protein resides in the host nucleus. The protein localises to the host extracellular space. Its function is as follows. During virus replication, may deplete host UNG protein, and incude G2-M cell cycle arrest. Acts by targeting specific host proteins for degradation by the 26S proteasome, through association with the cellular CUL4A-DDB1 E3 ligase complex by direct interaction with host VPRPB/DCAF-1. Cell cycle arrest reportedly occurs within hours of infection and is not blocked by antiviral agents, suggesting that it is initiated by the VPR carried into the virion. Additionally, VPR induces apoptosis in a cell cycle dependent manner suggesting that these two effects are mechanistically linked. Detected in the serum and cerebrospinal fluid of AIDS patient, VPR may also induce cell death to bystander cells. In terms of biological role, during virus entry, plays a role in the transport of the viral pre-integration (PIC) complex to the host nucleus. This function is crucial for viral infection of non-dividing macrophages. May act directly at the nuclear pore complex, by binding nucleoporins phenylalanine-glycine (FG)-repeat regions. The protein is Protein Vpr of Human immunodeficiency virus type 1 group M subtype C (isolate 92BR025) (HIV-1).